The following is a 952-amino-acid chain: MTNPSEGTTPLAFRYTPELANKIEGEWQNYWTDNGTFNAPNPVGDLAPADGKALPEDKLFVQDMFPYPSGAGLHVGHPLGYIATDVFARYNRMLGKNVLHTLGYDAFGLPAEQYAIQTGTHPRTTTMANIENMKRQLGALGLGHDSRRAVATTDPEFYKWTQWIFLQIFNSWFDAEQQKARPISELIPLLESGELKTKDGADYNALGDVEKQKAVDDYRLVYRSNSTVNWCPGLGTVLANEEVTADGRSERGNFPVFRKNLSQWMMRITAYSDRLIDDLELLDWTEKVKSMQRNWIGRSRGAEVDFSAEGETVTVFTTRPDTLFGATYMVLAPEHELVDVLLEKAGSYEGVDARWTNGQASPAEAVAAYRASIAAKSDLERQENKEKTGVFLGVYATNPVNGDQIPVFIADYVLTGYGTGAIMAVPAHDERDYEFATVLGLPIKEVVAGGNIEEAAFTESGEAVNSANDNGLDINGLAKDEAVAKTIEWLEEKELGRGTIQYKLRDWLFARQRYWGEPFPIVYDENGQAHALPDSMLPVELPEVEDYKPVSFDPEDADSEPSPPLAKAREWVEVELDLGDGKKKYTRDTNVMPQWAGSSWYQLRYVDPSNDEQFCNIENERYWTGPRPETHGPNDPGGVDLYVGGVEHAVLHLLYARFWHKVLFDLGHVSSKEPYRRLYNQGYIQAFAYTDSRGVYVPADDVEEKDGKFFYQGEEVNQEYGKMGKSLKNAVAPDDICNNFGADTLRVYEMAMGPLDTSRPWATKDVVGAQRFLQRLWRLVVDENTGEVLTRDEVLTDDDNKQLHRTIAGVRDDYTNLRVNTVVAKLIEYVNYLTKTYPDTIPAGAVLPLIVMVSPVAPHIAEELWKKLGHDDTVTYEPFPTFEEKWLTDDEIELPVQVNGKVRGRITVAADASQEQVIEAALADEKVQEQISGKNLIKQIVVPGRMVNLVVK.

Residues 66-77 (PYPSGAGLHVGH) carry the 'HIGH' region motif. A 'KMSKS' region motif is present at residues 722–726 (KMGKS). Lysine 725 is a binding site for ATP.

This sequence belongs to the class-I aminoacyl-tRNA synthetase family.

The protein localises to the cytoplasm. It carries out the reaction tRNA(Leu) + L-leucine + ATP = L-leucyl-tRNA(Leu) + AMP + diphosphate. The protein is Leucine--tRNA ligase of Corynebacterium glutamicum (strain R).